A 435-amino-acid chain; its full sequence is MNLHSHSISSLQGALTVPGDKSISHRAAILGGLAEGVTEVDNFLCSEDCLNTLRAMEQLGAKVDVLEERQGYGPVRFRITGVAMSPKAPERPIDCGNSGTGMRLLAGMLAACPFDSEMFGDASLSSRPMGRIMQPLEQMGARIEARGAKPGCAPLSIHGGRVHPISYTLPMASAQVKSAILLAGMFADGTTTVRQPAVTRDHTERLFRHFGVPCTVDGLTVGTCGPALPVAHDLTVPADISSAAFWMVAAASRPGSRLTLRQVGLNKTRNAVISALQRMGARMDIVPTSPEDAGEPYGDITVYGSDSLHGTSLLPEEIPNLIDEIPILAVAGALGRGDFIVRNARELRVKETDRIATTAANLRLMGVDVEEFDDGMVVHGGTPLKGTELSSYGDHRIAMSFLVAGLSAQGETVVTDAECINTSYPGFERDLAQFL.

3-phosphoshikimate contacts are provided by lysine 21, serine 22, and arginine 26. Lysine 21 is a phosphoenolpyruvate binding site. Positions 99 and 127 each coordinate phosphoenolpyruvate. The 3-phosphoshikimate site is built by serine 173, glutamine 175, aspartate 323, and lysine 350. Residue glutamine 175 participates in phosphoenolpyruvate binding. The active-site Proton acceptor is aspartate 323. Positions 354 and 396 each coordinate phosphoenolpyruvate.

This sequence belongs to the EPSP synthase family. As to quaternary structure, monomer.

It localises to the cytoplasm. The catalysed reaction is 3-phosphoshikimate + phosphoenolpyruvate = 5-O-(1-carboxyvinyl)-3-phosphoshikimate + phosphate. Its pathway is metabolic intermediate biosynthesis; chorismate biosynthesis; chorismate from D-erythrose 4-phosphate and phosphoenolpyruvate: step 6/7. In terms of biological role, catalyzes the transfer of the enolpyruvyl moiety of phosphoenolpyruvate (PEP) to the 5-hydroxyl of shikimate-3-phosphate (S3P) to produce enolpyruvyl shikimate-3-phosphate and inorganic phosphate. This chain is 3-phosphoshikimate 1-carboxyvinyltransferase, found in Akkermansia muciniphila (strain ATCC BAA-835 / DSM 22959 / JCM 33894 / BCRC 81048 / CCUG 64013 / CIP 107961 / Muc).